We begin with the raw amino-acid sequence, 329 residues long: Serpentine receptor class alpha-4 (329 aa).

6 helical membrane passes run 25 to 45, 103 to 123, 144 to 164, 188 to 208, 238 to 258, and 273 to 293; these read IIVL…IKVV, LYLE…TGLL, GLAI…LIIW, YFQS…ILIW, ICFL…GFFI, and LVAV…ILIF.

The protein belongs to the nematode receptor-like protein sra family.

The protein localises to the membrane. In Caenorhabditis elegans, this protein is Serpentine receptor class alpha-4 (sra-4).